The primary structure comprises 126 residues: DNA-directed RNA polymerase 35 kDa subunit (126 aa).

Belongs to the poxviridae DNA-directed RNA polymerase 35 kDa subunit family. In terms of assembly, the DNA-dependent RNA polymerase used for intermediate and late genes expression consists of eight subunits 147 kDa, 133 kDa, 35 kDa, 30 kDa, 22 kDa, 19 kDa, 18 kDa and 7 kDa totalling more than 500 kDa in mass. The same holoenzyme, with the addition of the transcription-specificity factor RAP94, is used for early gene expression.

Its subcellular location is the virion. It carries out the reaction RNA(n) + a ribonucleoside 5'-triphosphate = RNA(n+1) + diphosphate. Part of the DNA-dependent RNA polymerase which catalyzes the transcription of viral DNA into RNA using the four ribonucleoside triphosphates as substrates. Responsible for the transcription of early, intermediate and late genes. DNA-dependent RNA polymerase associates with the early transcription factor (ETF) thereby allowing the early genes transcription. Late transcription, and probably also intermediate transcription, require newly synthesized RNA polymerase. The sequence is that of DNA-directed RNA polymerase 35 kDa subunit (RPO35) from Ovis aries (Sheep).